A 100-amino-acid chain; its full sequence is MNQERLMQVLLAPQISEKATYVADKYEQVIFRVASDATKPEIKAAVELLFKVEVEGVQVANVKGKVKRFKGATGRRKGWKKAYVSLKPGQEINFVEGGNA.

Belongs to the universal ribosomal protein uL23 family. As to quaternary structure, part of the 50S ribosomal subunit. Contacts protein L29, and trigger factor when it is bound to the ribosome.

One of the early assembly proteins it binds 23S rRNA. One of the proteins that surrounds the polypeptide exit tunnel on the outside of the ribosome. Forms the main docking site for trigger factor binding to the ribosome. The sequence is that of Large ribosomal subunit protein uL23 from Dechloromonas aromatica (strain RCB).